Reading from the N-terminus, the 189-residue chain is Glucose-6-phosphate isomerase (189 aa).

The Fe cation site is built by His88, His90, Glu97, and His136.

The protein belongs to the archaeal-type GPI family. Homodimer. Fe cation serves as cofactor.

The protein resides in the cytoplasm. The catalysed reaction is alpha-D-glucose 6-phosphate = beta-D-fructose 6-phosphate. Its pathway is carbohydrate degradation; glycolysis; D-glyceraldehyde 3-phosphate and glycerone phosphate from D-glucose: step 2/4. The polypeptide is Glucose-6-phosphate isomerase (pgiA) (Pyrococcus abyssi (strain GE5 / Orsay)).